The sequence spans 266 residues: Cytochrome c oxidase subunit 2 (266 aa).

The Mitochondrial intermembrane portion of the chain corresponds to 1 to 43 (MTITNYINNQFTFLDMAEPWQLGFQDPATPVMEGIINFHHDLM). The chain crosses the membrane as a helical span at residues 44-64 (FFLISIVVFVCWMLFRVITLF). Residues 65–82 (DEKKNKIPATVVHGATIE) lie on the Mitochondrial matrix side of the membrane. A helical membrane pass occupies residues 83–103 (IIWTSIPALILLTVAVPSFAL). The Mitochondrial intermembrane segment spans residues 104–266 (LYSMDEVIDP…NVXLIKFYGI (163 aa)). The Cu cation site is built by H186, C221, E223, C225, H229, and M232. E223 lines the Mg(2+) pocket.

It belongs to the cytochrome c oxidase subunit 2 family. In terms of assembly, component of the cytochrome c oxidase (complex IV, CIV), a multisubunit enzyme composed of a catalytic core of 3 subunits and several supernumerary subunits. The complex exists as a monomer or a dimer and forms supercomplexes (SCs) in the inner mitochondrial membrane with ubiquinol-cytochrome c oxidoreductase (cytochrome b-c1 complex, complex III, CIII). Cu cation serves as cofactor.

It localises to the mitochondrion inner membrane. The enzyme catalyses 4 Fe(II)-[cytochrome c] + O2 + 8 H(+)(in) = 4 Fe(III)-[cytochrome c] + 2 H2O + 4 H(+)(out). Component of the cytochrome c oxidase, the last enzyme in the mitochondrial electron transport chain which drives oxidative phosphorylation. The respiratory chain contains 3 multisubunit complexes succinate dehydrogenase (complex II, CII), ubiquinol-cytochrome c oxidoreductase (cytochrome b-c1 complex, complex III, CIII) and cytochrome c oxidase (complex IV, CIV), that cooperate to transfer electrons derived from NADH and succinate to molecular oxygen, creating an electrochemical gradient over the inner membrane that drives transmembrane transport and the ATP synthase. Cytochrome c oxidase is the component of the respiratory chain that catalyzes the reduction of oxygen to water. Electrons originating from reduced cytochrome c in the intermembrane space (IMS) are transferred via the dinuclear copper A center (CU(A)) of subunit 2 and heme A of subunit 1 to the active site in subunit 1, a binuclear center (BNC) formed by heme A3 and copper B (CU(B)). The BNC reduces molecular oxygen to 2 water molecules using 4 electrons from cytochrome c in the IMS and 4 protons from the mitochondrial matrix. The chain is Cytochrome c oxidase subunit 2 (COX2) from Phytophthora megasperma (Potato pink rot fungus).